The following is a 65-amino-acid chain: Large ribosomal subunit protein bL35 (65 aa).

This sequence belongs to the bacterial ribosomal protein bL35 family.

In Chlorobium phaeovibrioides (strain DSM 265 / 1930) (Prosthecochloris vibrioformis (strain DSM 265)), this protein is Large ribosomal subunit protein bL35.